Reading from the N-terminus, the 148-residue chain is Large ribosomal subunit protein bL28c (148 aa).

A chloroplast-targeting transit peptide spans 1-71 (MAASGMLISN…PLKPSLQPVA (71 aa)).

Component of the chloroplast large ribosomal subunit (LSU). Mature 70S chloroplast ribosomes of higher plants consist of a small (30S) and a large (50S) subunit. The 30S small subunit contains 1 molecule of ribosomal RNA (16S rRNA) and 24 different proteins. The 50S large subunit contains 3 rRNA molecules (23S, 5S and 4.5S rRNA) and 33 different proteins.

It localises to the plastid. It is found in the chloroplast. Functionally, component of the chloroplast ribosome (chloro-ribosome), a dedicated translation machinery responsible for the synthesis of chloroplast genome-encoded proteins, including proteins of the transcription and translation machinery and components of the photosynthetic apparatus. The chain is Large ribosomal subunit protein bL28c (RPL28) from Spinacia oleracea (Spinach).